A 421-amino-acid polypeptide reads, in one-letter code: MSKTHLTEQKFSDFALHPKVVEALEKKGFHNCTPIQALALPLTLAGRDVAGQAQTGTGKTMAFLTSTFHYLLSHPAIADRKVNQPRALIMAPTRELAVQIHADAEPLAEATGLKLGLAYGGDGYDKQLKVLESGVDILIGTTGRLIDYAKQNHINLGAIQVVVLDEADRMYDLGFIKDIRWLFRRMPPANQRLNMLFSATLSYRVRELAFEQMNNAEYIEVEPEQKTGHRIKEELFYPSNEEKMRLLQTLIEEEWPDRAIIFANTKHRCEEIWGHLAADGHRVGLLTGDVAQKKRLRILDEFTRGDLDILVATDVAARGLHIPAVTHVFNYDLPDDCEDYVHRIGRTGRAGASGHSISLACEEYALNLPAIENYIGHSILVSKYNPDALMTDLPKPLRLTRARTGNGPRRTGAPRNRRRSG.

Residues 9–37 (QKFSDFALHPKVVEALEKKGFHNCTPIQA) carry the Q motif motif. The region spanning 40–219 (LPLTLAGRDV…FEQMNNAEYI (180 aa)) is the Helicase ATP-binding domain. An ATP-binding site is contributed by 53–60 (AQTGTGKT). A DEAD box motif is present at residues 165–168 (DEAD). The Helicase C-terminal domain maps to 245-390 (RLLQTLIEEE…VSKYNPDALM (146 aa)). The tract at residues 395-421 (KPLRLTRARTGNGPRRTGAPRNRRRSG) is disordered. The span at 402–414 (ARTGNGPRRTGAP) shows a compositional bias: low complexity.

It belongs to the DEAD box helicase family. RhlB subfamily. In terms of assembly, component of the RNA degradosome, which is a multiprotein complex involved in RNA processing and mRNA degradation.

Its subcellular location is the cytoplasm. It catalyses the reaction ATP + H2O = ADP + phosphate + H(+). Its function is as follows. DEAD-box RNA helicase involved in RNA degradation. Has RNA-dependent ATPase activity and unwinds double-stranded RNA. This Shigella flexneri serotype 5b (strain 8401) protein is ATP-dependent RNA helicase RhlB.